The chain runs to 700 residues: Putative proline-rich receptor-like protein kinase PERK6 (700 aa).

The interval 1–180 (MAEGQSPENS…SGGGSNSSGN (180 aa)) is disordered. The Extracellular portion of the chain corresponds to 1–186 (MAEGQSPENS…SSGNNEPNTA (186 aa)). 2 stretches are compositionally biased toward pro residues: residues 9–19 (NSPPSPTPPSP) and 29–47 (SPPP…PPPD). Over residues 48–137 (DSSNGSPQPP…GNNNDNNNQN (90 aa)) the composition is skewed to low complexity. Residue Asn-176 is glycosylated (N-linked (GlcNAc...) asparagine). The helical transmembrane segment at 187–207 (AIVGIVAGAGLLFLVMILFCV) threads the bilayer. Over 208-700 (CCCRKKKKKH…NNKTTPSRDH (493 aa)) the chain is Cytoplasmic. The tract at residues 249 to 315 (NLSQQYPGSN…GPSVPPPHPS (67 aa)) is disordered. Residues 255–265 (PGSNGNNNWMN) show a composition bias toward low complexity. Over residues 266–286 (SPPPPPPGSWQPSPPPPPPPV) the composition is skewed to pro residues. Phosphothreonine is present on Thr-326. Residues 337–615 (FSQSRLLGQG…VRALEGDATL (279 aa)) form the Protein kinase domain. ATP is bound by residues 343–351 (LGQGGFGYV) and Lys-365. Tyr-410 bears the Phosphotyrosine mark. Asp-461 functions as the Proton acceptor in the catalytic mechanism. Phosphoserine occurs at positions 465 and 494. Phosphothreonine is present on residues Thr-495 and Thr-500. The residue at position 508 (Tyr-508) is a Phosphotyrosine. Disordered regions lie at residues 616-642 (DDLS…DSST) and 659-700 (EYGA…SRDH). The segment covering 689–700 (ANNNKTTPSRDH) has biased composition (polar residues).

This sequence belongs to the protein kinase superfamily. Ser/Thr protein kinase family. In terms of tissue distribution, mostly expressed in flower buds.

It localises to the cell membrane. It catalyses the reaction L-seryl-[protein] + ATP = O-phospho-L-seryl-[protein] + ADP + H(+). The enzyme catalyses L-threonyl-[protein] + ATP = O-phospho-L-threonyl-[protein] + ADP + H(+). This Arabidopsis thaliana (Mouse-ear cress) protein is Putative proline-rich receptor-like protein kinase PERK6 (PERK6).